The chain runs to 527 residues: Putative BTB/POZ domain and WD-repeat protein R783 (527 aa).

A BTB domain is found at 45–115; it reads TDVTIVLDDG…FYSQNTDTRN (71 aa). WD repeat units lie at residues 215 to 266, 272 to 310, 313 to 353, 355 to 391, and 436 to 476; these read IHGD…VEAS, NVKTRFEHFCYLPSNNHLISTSSYNIYVWDLSTNKLIKT, KHKN…IVRC, ISPVDCICYSSSGRELVIVNKHYIKVFNVSDGTFLFK, and YCPS…DNKY.

It belongs to the mimivirus BTB/WD family.

This chain is Putative BTB/POZ domain and WD-repeat protein R783, found in Acanthamoeba polyphaga (Amoeba).